The sequence spans 292 residues: Sulfhydrogenase 1 subunit gamma (292 aa).

Residues 15-115 form the FAD-binding FR-type domain; it reads YALHRVKVLK…RGPYGNGFPV (101 aa). Positions 253, 258, 261, and 273 each coordinate [2Fe-2S] cluster.

Heterotetramer of alpha, beta, gamma and delta subunits. The nickel-containing alpha and delta subunits constitute the hydrogenase activity. The beta and gamma subunits (flavin-containing dimer) constitute the sulfur reductase activity. Requires FAD as cofactor. The cofactor is [2Fe-2S] cluster.

The protein localises to the cytoplasm. The catalysed reaction is n sulfur + H2 = (n-1) sulfur + hydrogen sulfide + H(+). Its activity is regulated as follows. Stimulated by rubredoxin at pH 7.6 but not ferredoxin. Its function is as follows. Part of a bifunctional enzyme complex that functions as an NADPH-dependent hydrogen-evolving hydrogenase with sulfur reducing activity. May play a role in hydrogen cycling during fermentative growth. Activity not exhibited with NAD. The beta and gamma subunits form the sulfur reducing component that catalyzes the cytoplasmic production of hydrogen sulfide in the presence of elemental sulfur. Not active in the presence of sodium sulfate, sodium sulfite, sodium thiosulfate or cysteine. The protein is Sulfhydrogenase 1 subunit gamma of Pyrococcus furiosus (strain ATCC 43587 / DSM 3638 / JCM 8422 / Vc1).